The sequence spans 194 residues: Imidazoleglycerol-phosphate dehydratase (194 aa).

This sequence belongs to the imidazoleglycerol-phosphate dehydratase family.

The protein resides in the cytoplasm. The enzyme catalyses D-erythro-1-(imidazol-4-yl)glycerol 3-phosphate = 3-(imidazol-4-yl)-2-oxopropyl phosphate + H2O. It participates in amino-acid biosynthesis; L-histidine biosynthesis; L-histidine from 5-phospho-alpha-D-ribose 1-diphosphate: step 6/9. The protein is Imidazoleglycerol-phosphate dehydratase of Sulfurisphaera tokodaii (strain DSM 16993 / JCM 10545 / NBRC 100140 / 7) (Sulfolobus tokodaii).